The primary structure comprises 1445 residues: CD109 antigen (1445 aa).

An N-terminal signal peptide occupies residues 1–21 (MQGPPLLTAAHLLCVCTAALA). Residues Asn68, Asn118, Asn247, Asn279, Asn365, Asn419, Asn513, and Asn645 are each glycosylated (N-linked (GlcNAc...) asparagine). The bait region (approximate) stretch occupies residues 593-702 (DKSVNLMNAS…TWIWLDTNMG (110 aa)). Residues 921-924 (CGEQ) constitute a cross-link (isoglutamyl cysteine thioester (Cys-Gln)). N-linked (GlcNAc...) asparagine glycans are attached at residues Asn1086 and Asn1355. Ala1420 carries the GPI-anchor amidated alanine lipid modification. The propeptide at 1421–1445 (SGSHHHSSVIFIFCFKLLYFMELWL) is removed in mature form.

Belongs to the protease inhibitor I39 (alpha-2-macroglobulin) family. Heterodimer; disulfide-linked. Interacts with TGFB1 and TGFBR1. Forms a heteromeric complex with TGFBR1, TGFBR2 and TGFBR3 in a ligand-independent manner. In terms of processing, N-glycosylated. 2 forms of 150 (p150) and 120 kDa (p120) exist due to proteolytic degradation from a 180 kDa form. As to expression, widely expressed with high level in uterus, aorta, heart, lung, trachea, placenta and in fetal heart, kidney, liver, spleen and lung. Expressed by CD34(+) acute myeloid leukemia cell lines, T-cell lines, activated T-lymphoblasts, endothelial cells and activated platelets. Isoform 4 is expressed in placenta. Isoform 1 is expressed in keratinocytes and placenta.

It localises to the cell membrane. Its function is as follows. Modulates negatively TGFB1 signaling in keratinocytes. In Homo sapiens (Human), this protein is CD109 antigen (CD109).